Here is a 361-residue protein sequence, read N- to C-terminus: Phosphoserine aminotransferase (361 aa).

Arg42 serves as a coordination point for L-glutamate. Pyridoxal 5'-phosphate-binding positions include Ala76–Arg77, Trp102, Thr153, Asp173, and Gln196. The residue at position 197 (Lys197) is an N6-(pyridoxal phosphate)lysine. Asn238–Thr239 contributes to the pyridoxal 5'-phosphate binding site.

It belongs to the class-V pyridoxal-phosphate-dependent aminotransferase family. SerC subfamily. As to quaternary structure, homodimer. It depends on pyridoxal 5'-phosphate as a cofactor.

Its subcellular location is the cytoplasm. The enzyme catalyses O-phospho-L-serine + 2-oxoglutarate = 3-phosphooxypyruvate + L-glutamate. The catalysed reaction is 4-(phosphooxy)-L-threonine + 2-oxoglutarate = (R)-3-hydroxy-2-oxo-4-phosphooxybutanoate + L-glutamate. It participates in amino-acid biosynthesis; L-serine biosynthesis; L-serine from 3-phospho-D-glycerate: step 2/3. It functions in the pathway cofactor biosynthesis; pyridoxine 5'-phosphate biosynthesis; pyridoxine 5'-phosphate from D-erythrose 4-phosphate: step 3/5. Its function is as follows. Catalyzes the reversible conversion of 3-phosphohydroxypyruvate to phosphoserine and of 3-hydroxy-2-oxo-4-phosphonooxybutanoate to phosphohydroxythreonine. This Buchnera aphidicola subsp. Acyrthosiphon pisum (strain Tuc7) protein is Phosphoserine aminotransferase.